We begin with the raw amino-acid sequence, 188 residues long: CMT1A duplicated region transcript 15 protein (188 aa).

In terms of tissue distribution, expressed in fetal heart, kidney, liver, lung and spleen.

The polypeptide is CMT1A duplicated region transcript 15 protein (CDRT15) (Homo sapiens (Human)).